Reading from the N-terminus, the 274-residue chain is Diaminopimelate epimerase (274 aa).

Substrate contacts are provided by Asn11, Gln44, and Asn64. Cys73 serves as the catalytic Proton donor. Substrate contacts are provided by residues 74–75 (GN), Asn157, Asn190, and 208–209 (ER). Catalysis depends on Cys217, which acts as the Proton acceptor. 218 to 219 (GS) provides a ligand contact to substrate.

The protein belongs to the diaminopimelate epimerase family. As to quaternary structure, homodimer.

It is found in the cytoplasm. The enzyme catalyses (2S,6S)-2,6-diaminopimelate = meso-2,6-diaminopimelate. It functions in the pathway amino-acid biosynthesis; L-lysine biosynthesis via DAP pathway; DL-2,6-diaminopimelate from LL-2,6-diaminopimelate: step 1/1. Catalyzes the stereoinversion of LL-2,6-diaminopimelate (L,L-DAP) to meso-diaminopimelate (meso-DAP), a precursor of L-lysine and an essential component of the bacterial peptidoglycan. In Shigella boydii serotype 18 (strain CDC 3083-94 / BS512), this protein is Diaminopimelate epimerase.